A 42-amino-acid chain; its full sequence is Photosystem I reaction center subunit IX (42 aa).

A helical transmembrane segment spans residues 7–27 (YLSVAPVLSTLWFGSLAGLLI).

Belongs to the PsaJ family.

The protein localises to the plastid. It is found in the chloroplast thylakoid membrane. Functionally, may help in the organization of the PsaE and PsaF subunits. The sequence is that of Photosystem I reaction center subunit IX from Daucus carota (Wild carrot).